The primary structure comprises 218 residues: Ribosomal RNA small subunit methyltransferase G (218 aa).

S-adenosyl-L-methionine contacts are provided by residues G82, L87, 133–134 (VE), and R147.

Belongs to the methyltransferase superfamily. RNA methyltransferase RsmG family.

It localises to the cytoplasm. The enzyme catalyses guanosine(527) in 16S rRNA + S-adenosyl-L-methionine = N(7)-methylguanosine(527) in 16S rRNA + S-adenosyl-L-homocysteine. Functionally, specifically methylates the N7 position of guanine in position 527 of 16S rRNA. In Leptothrix cholodnii (strain ATCC 51168 / LMG 8142 / SP-6) (Leptothrix discophora (strain SP-6)), this protein is Ribosomal RNA small subunit methyltransferase G.